The primary structure comprises 223 residues: Cytidylate kinase (223 aa).

10–18 (GPAGTGKSS) contributes to the ATP binding site.

The protein belongs to the cytidylate kinase family. Type 1 subfamily.

It localises to the cytoplasm. The catalysed reaction is CMP + ATP = CDP + ADP. It catalyses the reaction dCMP + ATP = dCDP + ADP. In Mycobacterium leprae (strain Br4923), this protein is Cytidylate kinase.